A 185-amino-acid polypeptide reads, in one-letter code: Intraflagellar transport protein 22 homolog (185 aa).

GTP contacts are provided by residues 10–17 (GPCESGKT), 63–67 (DCGGD), and 123–126 (HKPG). Phosphoserine is present on S137.

Belongs to the small GTPase superfamily. Rab family. In terms of assembly, component of the IFT complex B, at least composed of IFT20, IFT22, IFT25, IFT27, IFT46, IFT52, TRAF3IP1/IFT54, IFT57, IFT74, IFT80, IFT81, and IFT88. Interacts with IFT88. Interacts with CFAP61.

Its subcellular location is the cell projection. The protein localises to the cilium. Small GTPase-like component of the intraflagellar transport (IFT) complex B. The protein is Intraflagellar transport protein 22 homolog (IFT22) of Homo sapiens (Human).